Here is a 118-residue protein sequence, read N- to C-terminus: UPF0342 protein BAMEG_3696 (118 aa).

Belongs to the UPF0342 family.

The polypeptide is UPF0342 protein BAMEG_3696 (Bacillus anthracis (strain CDC 684 / NRRL 3495)).